The chain runs to 124 residues: Small ribosomal subunit protein uS12 (124 aa).

A disordered region spans residues Met1 to Gly32. Residues Arg9–Lys20 are compositionally biased toward basic residues. Asp89 carries the 3-methylthioaspartic acid modification.

It belongs to the universal ribosomal protein uS12 family. In terms of assembly, part of the 30S ribosomal subunit. Contacts proteins S8 and S17. May interact with IF1 in the 30S initiation complex.

With S4 and S5 plays an important role in translational accuracy. In terms of biological role, interacts with and stabilizes bases of the 16S rRNA that are involved in tRNA selection in the A site and with the mRNA backbone. Located at the interface of the 30S and 50S subunits, it traverses the body of the 30S subunit contacting proteins on the other side and probably holding the rRNA structure together. The combined cluster of proteins S8, S12 and S17 appears to hold together the shoulder and platform of the 30S subunit. This Leptospira borgpetersenii serovar Hardjo-bovis (strain JB197) protein is Small ribosomal subunit protein uS12.